The primary structure comprises 102 residues: NADH-quinone oxidoreductase subunit K (102 aa).

Helical transmembrane passes span 6-26 (LEHG…GLMV), 30-50 (ILFV…AFVV), and 62-82 (VMFI…LAIL).

This sequence belongs to the complex I subunit 4L family. NDH-1 is composed of 13 different subunits. Subunits NuoA, H, J, K, L, M, N constitute the membrane sector of the complex.

The protein resides in the cell inner membrane. It carries out the reaction a quinone + NADH + 5 H(+)(in) = a quinol + NAD(+) + 4 H(+)(out). NDH-1 shuttles electrons from NADH, via FMN and iron-sulfur (Fe-S) centers, to quinones in the respiratory chain. The immediate electron acceptor for the enzyme in this species is believed to be ubiquinone. Couples the redox reaction to proton translocation (for every two electrons transferred, four hydrogen ions are translocated across the cytoplasmic membrane), and thus conserves the redox energy in a proton gradient. The polypeptide is NADH-quinone oxidoreductase subunit K (Pseudomonas aeruginosa (strain LESB58)).